The following is a 492-amino-acid chain: Ketol-acid reductoisomerase (NADP(+)) (492 aa).

One can recognise a KARI N-terminal Rossmann domain in the interval 14-208 (LDQLGRCRFM…GGHKAGVLES (195 aa)). NADP(+) contacts are provided by residues 45 to 48 (CGAQ), Arg68, Arg76, Ser78, and 108 to 110 (DKQ). Residue His132 is part of the active site. Residue Gly158 participates in NADP(+) binding. 2 consecutive KARI C-terminal knotted domains span residues 209 to 344 (SFVA…NAPK) and 345 to 485 (YDGK…MTDM). Positions 217, 221, 389, and 393 each coordinate Mg(2+). Ser414 contacts substrate.

Belongs to the ketol-acid reductoisomerase family. Mg(2+) serves as cofactor.

The catalysed reaction is (2R)-2,3-dihydroxy-3-methylbutanoate + NADP(+) = (2S)-2-acetolactate + NADPH + H(+). It carries out the reaction (2R,3R)-2,3-dihydroxy-3-methylpentanoate + NADP(+) = (S)-2-ethyl-2-hydroxy-3-oxobutanoate + NADPH + H(+). Its pathway is amino-acid biosynthesis; L-isoleucine biosynthesis; L-isoleucine from 2-oxobutanoate: step 2/4. The protein operates within amino-acid biosynthesis; L-valine biosynthesis; L-valine from pyruvate: step 2/4. Its function is as follows. Involved in the biosynthesis of branched-chain amino acids (BCAA). Catalyzes an alkyl-migration followed by a ketol-acid reduction of (S)-2-acetolactate (S2AL) to yield (R)-2,3-dihydroxy-isovalerate. In the isomerase reaction, S2AL is rearranged via a Mg-dependent methyl migration to produce 3-hydroxy-3-methyl-2-ketobutyrate (HMKB). In the reductase reaction, this 2-ketoacid undergoes a metal-dependent reduction by NADPH to yield (R)-2,3-dihydroxy-isovalerate. The protein is Ketol-acid reductoisomerase (NADP(+)) of Haemophilus influenzae (strain PittEE).